Reading from the N-terminus, the 108-residue chain is Large ribosomal subunit protein uL24 (108 aa).

Belongs to the universal ribosomal protein uL24 family. Part of the 50S ribosomal subunit.

Functionally, one of two assembly initiator proteins, it binds directly to the 5'-end of the 23S rRNA, where it nucleates assembly of the 50S subunit. In terms of biological role, one of the proteins that surrounds the polypeptide exit tunnel on the outside of the subunit. The sequence is that of Large ribosomal subunit protein uL24 from Mycoplasmopsis pulmonis (strain UAB CTIP) (Mycoplasma pulmonis).